A 386-amino-acid chain; its full sequence is 8-amino-7-oxononanoate synthase (386 aa).

R20 is a substrate binding site. 107-108 (GY) lines the pyridoxal 5'-phosphate pocket. Position 132 (H132) interacts with substrate. Pyridoxal 5'-phosphate is bound by residues S178, H206, and T234. K237 bears the N6-(pyridoxal phosphate)lysine mark. T351 is a substrate binding site.

It belongs to the class-II pyridoxal-phosphate-dependent aminotransferase family. BioF subfamily. Homodimer. Pyridoxal 5'-phosphate is required as a cofactor.

The catalysed reaction is 6-carboxyhexanoyl-[ACP] + L-alanine + H(+) = (8S)-8-amino-7-oxononanoate + holo-[ACP] + CO2. It functions in the pathway cofactor biosynthesis; biotin biosynthesis. Functionally, catalyzes the decarboxylative condensation of pimeloyl-[acyl-carrier protein] and L-alanine to produce 8-amino-7-oxononanoate (AON), [acyl-carrier protein], and carbon dioxide. The chain is 8-amino-7-oxononanoate synthase from Aromatoleum aromaticum (strain DSM 19018 / LMG 30748 / EbN1) (Azoarcus sp. (strain EbN1)).